Here is an 89-residue protein sequence, read N- to C-terminus: Small ribosomal subunit protein uS15 (89 aa).

Belongs to the universal ribosomal protein uS15 family. As to quaternary structure, part of the 30S ribosomal subunit. Forms a bridge to the 50S subunit in the 70S ribosome, contacting the 23S rRNA.

Its function is as follows. One of the primary rRNA binding proteins, it binds directly to 16S rRNA where it helps nucleate assembly of the platform of the 30S subunit by binding and bridging several RNA helices of the 16S rRNA. Forms an intersubunit bridge (bridge B4) with the 23S rRNA of the 50S subunit in the ribosome. The protein is Small ribosomal subunit protein uS15 of Brevibacillus brevis (strain 47 / JCM 6285 / NBRC 100599).